A 497-amino-acid polypeptide reads, in one-letter code: Probable cytosol aminopeptidase (497 aa).

Residues Lys-263 and Asp-268 each contribute to the Mn(2+) site. Lys-275 is a catalytic residue. Residues Asp-286, Asp-345, and Glu-347 each contribute to the Mn(2+) site. Arg-349 is a catalytic residue.

Belongs to the peptidase M17 family. The cofactor is Mn(2+).

The protein resides in the cytoplasm. The enzyme catalyses Release of an N-terminal amino acid, Xaa-|-Yaa-, in which Xaa is preferably Leu, but may be other amino acids including Pro although not Arg or Lys, and Yaa may be Pro. Amino acid amides and methyl esters are also readily hydrolyzed, but rates on arylamides are exceedingly low.. The catalysed reaction is Release of an N-terminal amino acid, preferentially leucine, but not glutamic or aspartic acids.. In terms of biological role, presumably involved in the processing and regular turnover of intracellular proteins. Catalyzes the removal of unsubstituted N-terminal amino acids from various peptides. In Methylorubrum populi (strain ATCC BAA-705 / NCIMB 13946 / BJ001) (Methylobacterium populi), this protein is Probable cytosol aminopeptidase.